Consider the following 317-residue polypeptide: Aspartate carbamoyltransferase catalytic subunit (317 aa).

Carbamoyl phosphate-binding residues include Arg66 and Thr67. Lys94 lines the L-aspartate pocket. Arg116, His144, and Gln147 together coordinate carbamoyl phosphate. Arg177 and Arg231 together coordinate L-aspartate. Gly272 and Pro273 together coordinate carbamoyl phosphate.

The protein belongs to the aspartate/ornithine carbamoyltransferase superfamily. ATCase family. Heterododecamer (2C3:3R2) of six catalytic PyrB chains organized as two trimers (C3), and six regulatory PyrI chains organized as three dimers (R2).

The enzyme catalyses carbamoyl phosphate + L-aspartate = N-carbamoyl-L-aspartate + phosphate + H(+). It functions in the pathway pyrimidine metabolism; UMP biosynthesis via de novo pathway; (S)-dihydroorotate from bicarbonate: step 2/3. Functionally, catalyzes the condensation of carbamoyl phosphate and aspartate to form carbamoyl aspartate and inorganic phosphate, the committed step in the de novo pyrimidine nucleotide biosynthesis pathway. The chain is Aspartate carbamoyltransferase catalytic subunit from Nitrobacter hamburgensis (strain DSM 10229 / NCIMB 13809 / X14).